A 112-amino-acid chain; its full sequence is Hydrogenase maturation factor HypA (112 aa).

Residue histidine 2 participates in Ni(2+) binding. Positions 72, 75, 88, and 91 each coordinate Zn(2+).

The protein belongs to the HypA/HybF family.

Involved in the maturation of [NiFe] hydrogenases. Required for nickel insertion into the metal center of the hydrogenase. The sequence is that of Hydrogenase maturation factor HypA from Francisella philomiragia subsp. philomiragia (strain ATCC 25017 / CCUG 19701 / FSC 153 / O#319-036).